A 142-amino-acid chain; its full sequence is Large ribosomal subunit protein uL11 (142 aa).

This sequence belongs to the universal ribosomal protein uL11 family. As to quaternary structure, part of the ribosomal stalk of the 50S ribosomal subunit. Interacts with L10 and the large rRNA to form the base of the stalk. L10 forms an elongated spine to which L12 dimers bind in a sequential fashion forming a multimeric L10(L12)X complex. Post-translationally, one or more lysine residues are methylated.

In terms of biological role, forms part of the ribosomal stalk which helps the ribosome interact with GTP-bound translation factors. The sequence is that of Large ribosomal subunit protein uL11 from Desulforudis audaxviator (strain MP104C).